A 66-amino-acid polypeptide reads, in one-letter code: Large ribosomal subunit protein bL35 (66 aa).

Belongs to the bacterial ribosomal protein bL35 family.

The sequence is that of Large ribosomal subunit protein bL35 from Azorhizobium caulinodans (strain ATCC 43989 / DSM 5975 / JCM 20966 / LMG 6465 / NBRC 14845 / NCIMB 13405 / ORS 571).